The sequence spans 239 residues: Ribonuclease PH (239 aa).

Residues arginine 86 and 124 to 126 (GTR) each bind phosphate.

This sequence belongs to the RNase PH family. As to quaternary structure, homohexameric ring arranged as a trimer of dimers.

It carries out the reaction tRNA(n+1) + phosphate = tRNA(n) + a ribonucleoside 5'-diphosphate. Functionally, phosphorolytic 3'-5' exoribonuclease that plays an important role in tRNA 3'-end maturation. Removes nucleotide residues following the 3'-CCA terminus of tRNAs; can also add nucleotides to the ends of RNA molecules by using nucleoside diphosphates as substrates, but this may not be physiologically important. Probably plays a role in initiation of 16S rRNA degradation (leading to ribosome degradation) during starvation. The chain is Ribonuclease PH from Rickettsia bellii (strain RML369-C).